A 315-amino-acid polypeptide reads, in one-letter code: T-box transcription factor tbx-8 (315 aa).

A DNA-binding region (T-box) is located at residues 11–195 (EDQDKLWNLF…FNPFAKGFRE (185 aa)). Positions 193–203 (FREGSQSDRKR) are enriched in basic and acidic residues. 2 disordered regions span residues 193-235 (FREG…SVSP) and 293-315 (PPPSLKNVKKEEQEDIEQEINVV). Residues 205-225 (SPSADDSTTDESSSQVSSPQP) show a composition bias toward low complexity. Over residues 305-315 (QEDIEQEINVV) the composition is skewed to acidic residues.

Its subcellular location is the nucleus. Transcription factor. Involved in the control of early morphogenesis of the intestine, hypodermis and body-wall muscle. Involved in regulating expression of vab-7. Appears to have partially redundant function to tbx-9. The polypeptide is T-box transcription factor tbx-8 (tbx-8) (Caenorhabditis elegans).